Consider the following 95-residue polypeptide: MLYKGCLMKSDVQLNLRAKESQRALIDAAAEILHKSRTDFILETACQAAEKVILDRRVFNFNDEQYEEFINLLDAPVADDPVIEKLLARKPQWDV.

The segment at 59–95 (FNFNDEQYEEFINLLDAPVADDPVIEKLLARKPQWDV) is neutralization domain.

The protein belongs to the TacA antitoxin family. As to quaternary structure, homodimer. Forms a complex with cognate toxin TacT1. Forms a 4:2 antitoxin:toxin complex with cognate toxin TacT1.

Antitoxin component of a type II toxin-antitoxin (TA) system. Counteracts the toxic effect of cognate toxin TacT1 (T8), but not TacT2 or TacT3. Plays a role in persister cell formation. Functionally, the TacA1-TacT1 complex binds (and probably represses) its own promoter DNA but not that of tacA3-tacT3, it does not repress the tacA3-tacT3 promoter. This Salmonella typhimurium (strain 14028s / SGSC 2262) protein is Antitoxin TacA1.